The sequence spans 412 residues: Proteasome-activating nucleotidase (412 aa).

Residues 18 to 72 adopt a coiled-coil conformation; that stretch reads YRYLVDRVAGMESQNQELKEQIRQLESDKRYIETQKIRYEREVRKLKSEIEHLKT. ATP-binding positions include 197-202 and His-336; that span reads GTGKTL. Residues 410-412 are docks into pockets in the proteasome alpha-ring to cause gate opening; that stretch reads MFA.

Belongs to the AAA ATPase family. In terms of assembly, homohexamer. The hexameric complex has a two-ring architecture resembling a top hat that caps the 20S proteasome core at one or both ends. Upon ATP-binding, the C-terminus of PAN interacts with the alpha-rings of the proteasome core by binding to the intersubunit pockets.

The protein resides in the cytoplasm. In terms of biological role, ATPase which is responsible for recognizing, binding, unfolding and translocation of substrate proteins into the archaeal 20S proteasome core particle. Is essential for opening the gate of the 20S proteasome via an interaction with its C-terminus, thereby allowing substrate entry and access to the site of proteolysis. Thus, the C-termini of the proteasomal ATPase function like a 'key in a lock' to induce gate opening and therefore regulate proteolysis. Unfolding activity requires energy from ATP hydrolysis, whereas ATP binding alone promotes ATPase-20S proteasome association which triggers gate opening, and supports translocation of unfolded substrates. In Methanospirillum hungatei JF-1 (strain ATCC 27890 / DSM 864 / NBRC 100397 / JF-1), this protein is Proteasome-activating nucleotidase.